The chain runs to 207 residues: Chloramphenicol acetyltransferase (207 aa).

The active-site Proton acceptor is H186.

This sequence belongs to the chloramphenicol acetyltransferase family. Homotrimer.

It catalyses the reaction chloramphenicol + acetyl-CoA = chloramphenicol 3-acetate + CoA. This enzyme is an effector of chloramphenicol resistance in bacteria. This Campylobacter coli protein is Chloramphenicol acetyltransferase.